The sequence spans 309 residues: Cytochrome c biogenesis protein CcsA (309 aa).

The next 8 membrane-spanning stretches (helical) occupy residues 18–38 (LGIL…GAVF), 43–63 (FFIV…QLLF), 67–87 (ISGH…AWGI), 102–122 (IIPS…CFVL), 148–168 (VMLS…VLFI), 216–236 (SILI…VWAN), 250–267 (TWAF…HMRI), and 279–299 (LATS…FLGI).

It belongs to the CcmF/CycK/Ccl1/NrfE/CcsA family. As to quaternary structure, may interact with ccs1.

The protein localises to the cellular thylakoid membrane. Required during biogenesis of c-type cytochromes (cytochrome c6 and cytochrome f) at the step of heme attachment. This is Cytochrome c biogenesis protein CcsA from Prochlorococcus marinus (strain MIT 9312).